The primary structure comprises 563 residues: GTPase Obg (563 aa).

The region spanning S2–I168 is the Obg domain. Residues A169–T349 form the OBG-type G domain. Residues G175 to S182, F200 to V204, D221 to G224, N301 to D304, and S330 to A332 each bind GTP. 2 residues coordinate Mg(2+): S182 and T202. Residues D383–P469 form the OCT domain. The interval M525–Q563 is disordered.

It belongs to the TRAFAC class OBG-HflX-like GTPase superfamily. OBG GTPase family. In terms of assembly, monomer. The cofactor is Mg(2+).

It is found in the cytoplasm. Functionally, an essential GTPase which binds GTP, GDP and possibly (p)ppGpp with moderate affinity, with high nucleotide exchange rates and a fairly low GTP hydrolysis rate. Plays a role in control of the cell cycle, stress response, ribosome biogenesis and in those bacteria that undergo differentiation, in morphogenesis control. The polypeptide is GTPase Obg (Bifidobacterium adolescentis (strain ATCC 15703 / DSM 20083 / NCTC 11814 / E194a)).